A 341-amino-acid polypeptide reads, in one-letter code: Tryptophan--tRNA ligase (341 aa).

ATP contacts are provided by residues 11-13 (RPT) and 19-20 (GH). A 'HIGH' region motif is present at residues 12–20 (PTGKLHIGH). An L-tryptophan-binding site is contributed by aspartate 140. Residues 152-154 (GND), leucine 194, and 202-206 (KMSKS) contribute to the ATP site. A 'KMSKS' region motif is present at residues 202 to 206 (KMSKS).

This sequence belongs to the class-I aminoacyl-tRNA synthetase family. In terms of assembly, homodimer.

It localises to the cytoplasm. The enzyme catalyses tRNA(Trp) + L-tryptophan + ATP = L-tryptophyl-tRNA(Trp) + AMP + diphosphate + H(+). Its function is as follows. Catalyzes the attachment of tryptophan to tRNA(Trp). This chain is Tryptophan--tRNA ligase, found in Lactococcus lactis subsp. lactis (strain IL1403) (Streptococcus lactis).